A 413-amino-acid chain; its full sequence is Serine hydroxymethyltransferase (413 aa).

Residues Leu117 and 121–123 (GHL) contribute to the (6S)-5,6,7,8-tetrahydrofolate site. At Lys226 the chain carries N6-(pyridoxal phosphate)lysine. Residue 349–351 (SPF) participates in (6S)-5,6,7,8-tetrahydrofolate binding.

The protein belongs to the SHMT family. Homodimer. Pyridoxal 5'-phosphate is required as a cofactor.

It is found in the cytoplasm. It catalyses the reaction (6R)-5,10-methylene-5,6,7,8-tetrahydrofolate + glycine + H2O = (6S)-5,6,7,8-tetrahydrofolate + L-serine. The protein operates within one-carbon metabolism; tetrahydrofolate interconversion. It participates in amino-acid biosynthesis; glycine biosynthesis; glycine from L-serine: step 1/1. Functionally, catalyzes the reversible interconversion of serine and glycine with tetrahydrofolate (THF) serving as the one-carbon carrier. This reaction serves as the major source of one-carbon groups required for the biosynthesis of purines, thymidylate, methionine, and other important biomolecules. Also exhibits THF-independent aldolase activity toward beta-hydroxyamino acids, producing glycine and aldehydes, via a retro-aldol mechanism. In Listeria monocytogenes serovar 1/2a (strain ATCC BAA-679 / EGD-e), this protein is Serine hydroxymethyltransferase.